The primary structure comprises 529 residues: Peptide chain release factor 3 (529 aa).

In terms of domain architecture, tr-type G spans 11-280 (AKRRTFAIIS…GLVEWAPAPM (270 aa)). Residues 20-27 (SHPDAGKT), 88-92 (DTPGH), and 142-145 (NKLD) each bind GTP.

Belongs to the TRAFAC class translation factor GTPase superfamily. Classic translation factor GTPase family. PrfC subfamily.

It localises to the cytoplasm. In terms of biological role, increases the formation of ribosomal termination complexes and stimulates activities of RF-1 and RF-2. It binds guanine nucleotides and has strong preference for UGA stop codons. It may interact directly with the ribosome. The stimulation of RF-1 and RF-2 is significantly reduced by GTP and GDP, but not by GMP. The chain is Peptide chain release factor 3 from Yersinia pestis bv. Antiqua (strain Antiqua).